Consider the following 289-residue polypeptide: Nucleotide-binding protein Francci3_1634 (289 aa).

An ATP-binding site is contributed by 13–20 (GLSGAGRS). 64–67 (DVRG) contacts GTP.

Belongs to the RapZ-like family.

In terms of biological role, displays ATPase and GTPase activities. The polypeptide is Nucleotide-binding protein Francci3_1634 (Frankia casuarinae (strain DSM 45818 / CECT 9043 / HFP020203 / CcI3)).